A 300-amino-acid polypeptide reads, in one-letter code: Inosose dehydratase (300 aa).

This sequence belongs to the IolE/MocC family. Glutathione serves as cofactor. The cofactor is Co(2+). It depends on Mn(2+) as a cofactor.

The enzyme catalyses scyllo-inosose = 3D-3,5/4-trihydroxycyclohexane-1,2-dione + H2O. Its function is as follows. Catalyzes the dehydration of inosose (2-keto-myo-inositol, 2KMI or 2,4,6/3,5-pentahydroxycyclohexanone) to 3D-(3,5/4)-trihydroxycyclohexane-1,2-dione (D-2,3-diketo-4-deoxy-epi-inositol). The polypeptide is Inosose dehydratase (Mesomycoplasma hyopneumoniae (strain 232) (Mycoplasma hyopneumoniae)).